Reading from the N-terminus, the 335-residue chain is Phospho-N-acetylmuramoyl-pentapeptide-transferase (335 aa).

The next 10 helical transmembrane spans lie at 3 to 23 (LTLIAGLISLLLTALIMPHFI), 53 to 73 (GGTVFLLVASFVSFLFAILFF), 78 to 98 (SMGLITGILAIVLIYGFIGFL), 118 to 138 (LSLQIVGGLIFYFLHVVPSGI), 143 to 163 (VFGFPVHLGLLYIFFVLFWVV), 175 to 195 (IDGLASISVVISLLTYSVIAI), 200 to 220 (YDVLLLCGIMIGALLGFFIFN), 226 to 246 (VFMGDVGSLALGAMLAAISIA), 251 to 271 (WTLLVIGLVYVFETSSVMLQV), and 314 to 334 (VDAFLWSVGAVSSLIVLAILY).

Belongs to the glycosyltransferase 4 family. MraY subfamily. Requires Mg(2+) as cofactor.

The protein resides in the cell membrane. The enzyme catalyses UDP-N-acetyl-alpha-D-muramoyl-L-alanyl-gamma-D-glutamyl-L-lysyl-D-alanyl-D-alanine + di-trans,octa-cis-undecaprenyl phosphate = Mur2Ac(oyl-L-Ala-gamma-D-Glu-L-Lys-D-Ala-D-Ala)-di-trans,octa-cis-undecaprenyl diphosphate + UMP. The protein operates within cell wall biogenesis; peptidoglycan biosynthesis. Functionally, catalyzes the initial step of the lipid cycle reactions in the biosynthesis of the cell wall peptidoglycan: transfers peptidoglycan precursor phospho-MurNAc-pentapeptide from UDP-MurNAc-pentapeptide onto the lipid carrier undecaprenyl phosphate, yielding undecaprenyl-pyrophosphoryl-MurNAc-pentapeptide, known as lipid I. The chain is Phospho-N-acetylmuramoyl-pentapeptide-transferase from Streptococcus uberis (strain ATCC BAA-854 / 0140J).